Reading from the N-terminus, the 311-residue chain is Methionyl-tRNA formyltransferase (311 aa).

110-113 (SLLP) contacts (6S)-5,6,7,8-tetrahydrofolate.

The protein belongs to the Fmt family.

It catalyses the reaction L-methionyl-tRNA(fMet) + (6R)-10-formyltetrahydrofolate = N-formyl-L-methionyl-tRNA(fMet) + (6S)-5,6,7,8-tetrahydrofolate + H(+). Attaches a formyl group to the free amino group of methionyl-tRNA(fMet). The formyl group appears to play a dual role in the initiator identity of N-formylmethionyl-tRNA by promoting its recognition by IF2 and preventing the misappropriation of this tRNA by the elongation apparatus. This is Methionyl-tRNA formyltransferase from Streptococcus sanguinis (strain SK36).